Here is a 600-residue protein sequence, read N- to C-terminus: NADPH-dependent diflavin oxidoreductase 1 (600 aa).

Residues 6–150 (LLILYGSQTG…VVDPWLKDLW (145 aa)) enclose the Flavodoxin-like domain. Residues 12–17 (SQTGTA), 59–62 (ATTG), 97–106 (LGDSSYPKFN), and Asp132 contribute to the FMN site. Residues 210–449 (IHPFLAPVLS…WVKKGSMKFP (240 aa)) enclose the FAD-binding FR-type domain. FAD is bound by residues Arg354, 386–389 (RAFS), and 420–423 (GLCS). NADP(+) is bound by residues Thr463, 518 to 519 (SR), and 524 to 528 (KIYVQ). Trp599 is a binding site for FAD.

The protein belongs to the NADPH-dependent diflavin oxidoreductase NDOR1 family. In the N-terminal section; belongs to the flavodoxin family. It in the C-terminal section; belongs to the flavoprotein pyridine nucleotide cytochrome reductase family. As to quaternary structure, interacts with ciapin1; as part of the cytosolic iron-sulfur (Fe-S) protein assembly (CIA) machinery. FAD is required as a cofactor. Requires FMN as cofactor.

Its subcellular location is the cytoplasm. The protein resides in the perinuclear region. It catalyses the reaction 2 oxidized [2Fe-2S]-[protein] + NADPH = 2 reduced [2Fe-2S]-[protein] + NADP(+) + H(+). In terms of biological role, NADPH-dependent reductase which is a central component of the cytosolic iron-sulfur (Fe-S) protein assembly (CIA) machinery. Transfers electrons from NADPH via its FAD and FMN prosthetic groups to the [2Fe-2S] cluster of ciapin1, another key component of the CIA machinery. In turn, this reduced cluster provides electrons for assembly of cytosolic iron-sulfur cluster proteins. It can also reduce the [2Fe-2S] cluster of cisd1 and activate this protein implicated in Fe/S cluster repair. This is NADPH-dependent diflavin oxidoreductase 1 from Xenopus laevis (African clawed frog).